The primary structure comprises 1268 residues: Protein transport protein Sec24B (1268 aa).

2 stretches are compositionally biased toward low complexity: residues 1 to 14 (MSAPAGSSHPAASA) and 21 to 48 (GGAAVSGAAAPAGPGAGPAPHQQNGPAQ). Disordered regions lie at residues 1 to 71 (MSAP…SGHY), 216 to 263 (APTV…LTWS), 303 to 345 (QNVQ…SVTQ), and 362 to 451 (NNQA…VVPQ). Position 2 is an N-acetylserine (S2). Phosphoserine is present on S55. The span at 225–234 (NSFSGQNTAI) shows a compositional bias: polar residues. Composition is skewed to low complexity over residues 245-255 (SQQHHQQQSLS), 311-332 (SPVVSTVLSGSSGSSSTRTPPT), and 365-375 (ASSAPTPLSST). T329 bears the Phosphothreonine mark. Residues 376-389 (SDDEEEEEEDEEAG) are compositionally biased toward acidic residues. Pro residues predominate over residues 426-450 (APDPAPEPDPASAPAPASAPAPVVP). Zn(2+)-binding residues include C605, C608, C626, and C629. A zinc finger-like region spans residues 605-629 (CRSCRTYINPFVSFIDQRRWKCNLC). The Gelsolin-like repeat unit spans residues 1141-1213 (PQPPLQKLSA…TLSSERARSF (73 aa)). S1224 is modified (phosphoserine).

This sequence belongs to the SEC23/SEC24 family. SEC24 subfamily. COPII is composed of at least five proteins: the Sec23/24 complex, the Sec13/31 complex and SAR1. Interacts with STING1; promoting STING1 translocation to COPII vesicles in a STEEP1-dependent manner. Interacts with RNF139. Interacts with TMED2 and TMED10. Interacts with CNIH4.

Its subcellular location is the cytoplasmic vesicle. The protein resides in the COPII-coated vesicle membrane. It localises to the endoplasmic reticulum membrane. The protein localises to the cytoplasm. It is found in the cytosol. Functionally, component of the coat protein complex II (COPII) which promotes the formation of transport vesicles from the endoplasmic reticulum (ER). The coat has two main functions, the physical deformation of the endoplasmic reticulum membrane into vesicles and the selection of cargo molecules for their transport to the Golgi complex. Plays a central role in cargo selection within the COPII complex and together with SEC24A may have a different specificity compared to SEC24C and SEC24D. May package preferentially cargos with cytoplasmic DxE or LxxLE motifs and may also recognize conformational epitopes. In Homo sapiens (Human), this protein is Protein transport protein Sec24B.